Reading from the N-terminus, the 200-residue chain is Dephospho-CoA kinase (200 aa).

The DPCK domain maps to 4–200; sequence VIGLTGGIAS…AILKKWNIID (197 aa). 12-17 contacts ATP; that stretch reads ASGKST.

This sequence belongs to the CoaE family.

Its subcellular location is the cytoplasm. The catalysed reaction is 3'-dephospho-CoA + ATP = ADP + CoA + H(+). Its pathway is cofactor biosynthesis; coenzyme A biosynthesis; CoA from (R)-pantothenate: step 5/5. Functionally, catalyzes the phosphorylation of the 3'-hydroxyl group of dephosphocoenzyme A to form coenzyme A. The sequence is that of Dephospho-CoA kinase from Bacillus anthracis.